Reading from the N-terminus, the 357-residue chain is Probable dual-specificity RNA methyltransferase RlmN (357 aa).

Glu92 functions as the Proton acceptor in the catalytic mechanism. The Radical SAM core domain occupies 98–330 (QEYGLSVCVT…KKNGINCVIR (233 aa)). Cys105 and Cys341 are joined by a disulfide. Positions 112, 116, and 119 each coordinate [4Fe-4S] cluster. S-adenosyl-L-methionine-binding positions include 164–165 (GE), Ser196, 219–221 (SLH), and Asn297. Catalysis depends on Cys341, which acts as the S-methylcysteine intermediate.

This sequence belongs to the radical SAM superfamily. RlmN family. The cofactor is [4Fe-4S] cluster.

It localises to the cytoplasm. It catalyses the reaction adenosine(2503) in 23S rRNA + 2 reduced [2Fe-2S]-[ferredoxin] + 2 S-adenosyl-L-methionine = 2-methyladenosine(2503) in 23S rRNA + 5'-deoxyadenosine + L-methionine + 2 oxidized [2Fe-2S]-[ferredoxin] + S-adenosyl-L-homocysteine. The enzyme catalyses adenosine(37) in tRNA + 2 reduced [2Fe-2S]-[ferredoxin] + 2 S-adenosyl-L-methionine = 2-methyladenosine(37) in tRNA + 5'-deoxyadenosine + L-methionine + 2 oxidized [2Fe-2S]-[ferredoxin] + S-adenosyl-L-homocysteine. Its function is as follows. Specifically methylates position 2 of adenine 2503 in 23S rRNA and position 2 of adenine 37 in tRNAs. The protein is Probable dual-specificity RNA methyltransferase RlmN of Enterococcus faecalis (strain ATCC 700802 / V583).